A 302-amino-acid polypeptide reads, in one-letter code: UPF0725 protein At1g23960 (302 aa).

Alanine 2 bears the N-acetylalanine mark.

This sequence belongs to the UPF0725 (EMB2204) family.

In Arabidopsis thaliana (Mouse-ear cress), this protein is UPF0725 protein At1g23960.